The sequence spans 289 residues: Geranylgeranyl diphosphate synthase (289 aa).

Isopentenyl diphosphate contacts are provided by Arg43 and His73. The Mg(2+) site is built by Asp80 and Asp86. Residue Arg91 participates in (2E,6E)-farnesyl diphosphate binding. Residue Arg92 coordinates isopentenyl diphosphate. 3 residues coordinate (2E,6E)-farnesyl diphosphate: Lys170, Thr171, and Gln205.

It belongs to the FPP/GGPP synthase family. The cofactor is Mg(2+).

It catalyses the reaction isopentenyl diphosphate + (2E,6E)-farnesyl diphosphate = (2E,6E,10E)-geranylgeranyl diphosphate + diphosphate. It functions in the pathway isoprenoid biosynthesis; geranylgeranyl diphosphate biosynthesis; geranylgeranyl diphosphate from farnesyl diphosphate and isopentenyl diphosphate: step 1/1. Catalyzes the condensation of farnesyl diphosphate (FPP) and isopentenyl diphosphate (IPP) to yield geranylgeranyl diphosphate (GGPP) needed for biosynthesis of carotenoids and diterpenes. The polypeptide is Geranylgeranyl diphosphate synthase (crtE) (Rhodobacter capsulatus (strain ATCC BAA-309 / NBRC 16581 / SB1003)).